The sequence spans 305 residues: Putative ankyrin repeat protein RF_0580 (305 aa).

ANK repeat units follow at residues 5 to 34 (YNKN…NIDE), 39 to 68 (RGET…SPNI), 72 to 101 (SGQT…NIDL), 107 to 136 (CGHS…DINS), 140 to 169 (FGAS…DVNA), 173 to 202 (YEDT…DVNI), and 206 to 235 (NNFT…TIKI).

In Rickettsia felis (strain ATCC VR-1525 / URRWXCal2) (Rickettsia azadi), this protein is Putative ankyrin repeat protein RF_0580.